The chain runs to 319 residues: Cobalamin biosynthesis protein CobD (319 aa).

A run of 4 helical transmembrane segments spans residues 55–75 (AVMW…VLAL), 78–98 (EIHP…VLAG), 153–173 (VDGI…LAMA), and 296–316 (LMWV…CLLV).

This sequence belongs to the CobD/CbiB family.

It localises to the cell membrane. Its pathway is cofactor biosynthesis; adenosylcobalamin biosynthesis. Its function is as follows. Converts cobyric acid to cobinamide by the addition of aminopropanol on the F carboxylic group. The protein is Cobalamin biosynthesis protein CobD of Citrobacter koseri (strain ATCC BAA-895 / CDC 4225-83 / SGSC4696).